Consider the following 333-residue polypeptide: MANIYYDADCDLSSLKGKTIAVIGYGSQGHAQAQNMKDSGLKVIIGLKEGSKSIQDAKNAGFEVYSVAEASQKADVIQILAPDTIQADLYKKDIEPNLKKGNALVFSHGFNIHYDFIKPPEEVDVYMVAPKGPGHLVRRVYTEGGGVPCLIAVHQDSTGEAKKRALAHAAGVGGGRAGILETSFREETETDLFGEQVVLCGGLSNLIMAGFETLTEAGYDPEIAYFECLHEVKLITDLIYEGGLARMRFSISDTAEYGDYVSGPRVIDPGVKQRMKEVLNDIQKDKGAKFATNWMAETKAGYPNFKNMRDKNAAHPIESVGKKLRSMMKWLSK.

Residues 2 to 182 form the KARI N-terminal Rossmann domain; that stretch reads ANIYYDADCD…GGGRAGILET (181 aa). Residues 25–28, lysine 48, serine 51, serine 53, and 83–86 contribute to the NADP(+) site; these read YGSQ and DTIQ. Histidine 108 is a catalytic residue. Position 134 (glycine 134) interacts with NADP(+). The region spanning 183–331 is the KARI C-terminal knotted domain; sequence SFREETETDL…KKLRSMMKWL (149 aa). The Mg(2+) site is built by aspartate 191, glutamate 195, glutamate 227, and glutamate 231. A substrate-binding site is contributed by serine 252.

It belongs to the ketol-acid reductoisomerase family. Mg(2+) serves as cofactor.

The enzyme catalyses (2R)-2,3-dihydroxy-3-methylbutanoate + NADP(+) = (2S)-2-acetolactate + NADPH + H(+). It carries out the reaction (2R,3R)-2,3-dihydroxy-3-methylpentanoate + NADP(+) = (S)-2-ethyl-2-hydroxy-3-oxobutanoate + NADPH + H(+). Its pathway is amino-acid biosynthesis; L-isoleucine biosynthesis; L-isoleucine from 2-oxobutanoate: step 2/4. It functions in the pathway amino-acid biosynthesis; L-valine biosynthesis; L-valine from pyruvate: step 2/4. In terms of biological role, involved in the biosynthesis of branched-chain amino acids (BCAA). Catalyzes an alkyl-migration followed by a ketol-acid reduction of (S)-2-acetolactate (S2AL) to yield (R)-2,3-dihydroxy-isovalerate. In the isomerase reaction, S2AL is rearranged via a Mg-dependent methyl migration to produce 3-hydroxy-3-methyl-2-ketobutyrate (HMKB). In the reductase reaction, this 2-ketoacid undergoes a metal-dependent reduction by NADPH to yield (R)-2,3-dihydroxy-isovalerate. This Leptospira borgpetersenii serovar Hardjo-bovis (strain JB197) protein is Ketol-acid reductoisomerase (NADP(+)).